A 95-amino-acid polypeptide reads, in one-letter code: Aspartyl/glutamyl-tRNA(Asn/Gln) amidotransferase subunit C (95 aa).

This sequence belongs to the GatC family. Heterotrimer of A, B and C subunits.

The enzyme catalyses L-glutamyl-tRNA(Gln) + L-glutamine + ATP + H2O = L-glutaminyl-tRNA(Gln) + L-glutamate + ADP + phosphate + H(+). The catalysed reaction is L-aspartyl-tRNA(Asn) + L-glutamine + ATP + H2O = L-asparaginyl-tRNA(Asn) + L-glutamate + ADP + phosphate + 2 H(+). Its function is as follows. Allows the formation of correctly charged Asn-tRNA(Asn) or Gln-tRNA(Gln) through the transamidation of misacylated Asp-tRNA(Asn) or Glu-tRNA(Gln) in organisms which lack either or both of asparaginyl-tRNA or glutaminyl-tRNA synthetases. The reaction takes place in the presence of glutamine and ATP through an activated phospho-Asp-tRNA(Asn) or phospho-Glu-tRNA(Gln). The protein is Aspartyl/glutamyl-tRNA(Asn/Gln) amidotransferase subunit C of Rhodopseudomonas palustris (strain ATCC BAA-98 / CGA009).